The primary structure comprises 324 residues: Olfactory receptor 5T17 (324 aa).

The Extracellular portion of the chain corresponds to 1–37 (MPRTPSYTNTKTTQVNNVTEITVFILLGFTDDVDMNI). Asn-17 carries N-linked (GlcNAc...) asparagine glycosylation. A helical membrane pass occupies residues 38–58 (FLFILFLAIYVVTLIGNLGLV). Over 59–66 (VLVIEDSR) the chain is Cytoplasmic. Residues 67-87 (LHNPMYYFLTVLSSLDACFSS) form a helical membrane-spanning segment. The Extracellular portion of the chain corresponds to 88–111 (VLTPKMLVNFLSKNKSISFAGCAT). Asn-101 is a glycosylation site (N-linked (GlcNAc...) asparagine). Cys-109 and Cys-201 form a disulfide bridge. The chain crosses the membrane as a helical span at residues 112–132 (QMLLFVTFGTTECFLLAAMAY). The Cytoplasmic segment spans residues 133 to 145 (DRYLAIYSPLLYA). The chain crosses the membrane as a helical span at residues 146–166 (VRMSPRVYVPLIIASYTGGIL). Residues 167–208 (HATIHTVATFSLSFCGSNEIRHVFCDIPPLLALSCSDTHLNQ) lie on the Extracellular side of the membrane. Residues 209-229 (LLLFYCAGSIELITILIVLVS) form a helical membrane-spanning segment. Topologically, residues 230-249 (YGFVLLAILKINSAEGRRKI) are cytoplasmic. The helical transmembrane segment at 250-270 (FSTCGAHLTGVSIFHGTILFM) threads the bilayer. At 271–283 (YVRPSSNYTLEQD) the chain is on the extracellular side. N-linked (GlcNAc...) asparagine glycosylation occurs at Asn-277. The helical transmembrane segment at 284-304 (MVVSTFYTIVIPMLNPIIYSL) threads the bilayer. At 305 to 324 (RNKDVKEAMRKLLKRKLVHE) the chain is on the cytoplasmic side.

It belongs to the G-protein coupled receptor 1 family.

Its subcellular location is the cell membrane. In terms of biological role, potential odorant receptor. This Mus musculus (Mouse) protein is Olfactory receptor 5T17.